A 697-amino-acid polypeptide reads, in one-letter code: Serine/threonine-protein kinase tousled-like 2 (697 aa).

2 disordered regions span residues 25–159 (VAKG…SQSE) and 288–316 (KLLI…SKSN). Positions 31 to 44 (HNESSNQSLCSVGS) are enriched in polar residues. Basic and acidic residues predominate over residues 46-61 (SDKELETPEKKSNDQR). The span at 109-145 (SSPQHSLSNPPAAVQQGSPSSISSVNTDHSHTSTSHK) shows a compositional bias: polar residues. Coiled coils occupy residues 265 to 294 (AFQN…IKKK) and 336 to 373 (KLRL…IHNE). In terms of domain architecture, Protein kinase spans 388–666 (YLLLHLLGRG…VHQLASDPYL (279 aa)). Residues 394–402 (LGRGGFSEV) and lysine 417 contribute to the ATP site. Residue aspartate 518 is the Proton acceptor of the active site.

The protein belongs to the protein kinase superfamily. Ser/Thr protein kinase family. As to quaternary structure, monomer. May form homodimers; homodimerization may enhance autophosphoylation and enzymatic activity. Heterodimer with TLK1. Mg(2+) is required as a cofactor. In terms of processing, phosphorylated. Autophosphorylated; phosphorylation promotes the assembly of higher order oligomers and enzymatic activity.

Its subcellular location is the nucleus. The protein localises to the nucleoplasm. It is found in the cytoplasm. It localises to the perinuclear region. The protein resides in the cytoskeleton. It catalyses the reaction L-seryl-[protein] + ATP = O-phospho-L-seryl-[protein] + ADP + H(+). It carries out the reaction L-threonyl-[protein] + ATP = O-phospho-L-threonyl-[protein] + ADP + H(+). In terms of biological role, serine/threonine-protein kinase involved in the process of chromatin assembly and probably also DNA replication, transcription, repair, and chromosome segregation. Negative regulator of amino acid starvation-induced autophagy. The chain is Serine/threonine-protein kinase tousled-like 2 from Danio rerio (Zebrafish).